We begin with the raw amino-acid sequence, 399 residues long: F-box/kelch-repeat protein At5g48980 (399 aa).

Positions 1–11 (MADSQRLSTAS) are enriched in polar residues. The interval 1-29 (MADSQRLSTASGVKDGQPPWKKKKLSNDT) is disordered. Positions 29 to 75 (TTSNPSLPYDVILIILARVSRSYYTNLSLVSKSFRSILTSPELYKTR) constitute an F-box domain. A Kelch repeat occupies 199–248 (IVYLPGSFESPDSLNCVEVYNTMTQTWKPVPPEKRMFKLENLEKKIYYKS).

This chain is F-box/kelch-repeat protein At5g48980, found in Arabidopsis thaliana (Mouse-ear cress).